The sequence spans 241 residues: Antimicrobial ginkbilobin-2-like protein (241 aa).

An N-terminal signal peptide occupies residues 1–23 (MLSSKYISVSFLLLSLSLHAVNC). Gnk2-homologous domains follow at residues 25 to 127 (DPLY…NIDF) and 133 to 238 (NKNK…LYPF). 4 disulfides stabilise this stretch: Cys81-Cys90, Cys93-Cys118, Cys192-Cys201, and Cys204-Cys229. Asn89 is a glycosylation site (N-linked (GlcNAc...) asparagine).

This sequence belongs to the cysteine-rich repeat secretory protein family.

Its subcellular location is the secreted. Its function is as follows. Possesses antimicrobial activity toward the oomycete Phytophthora cinnamomi (ink disease agent), thus reducing its growth rate and confering an increased resistance to the plant. The chain is Antimicrobial ginkbilobin-2-like protein from Castanea crenata (Japanese chestnut).